The chain runs to 341 residues: L-amino acid-D/L-Glu epimerase (341 aa).

Residues Thr-132 and 157 to 159 contribute to the substrate site; that span reads KIK. Residues Asp-186, Glu-212, and Asp-237 each contribute to the Mg(2+) site. Substrate contacts are provided by residues Lys-261 and 315–317; that span reads DLD.

This sequence belongs to the mandelate racemase/muconate lactonizing enzyme family. Requires Mg(2+) as cofactor.

Catalyzes the epimerization of dipeptides with L-Glu in the second position. Has epimerase activity with L-Gly-L-Glu, L-Ala-L-Glu, L-Ser-L-Glu, L-Pro-L-Glu, L-Val-L-Glu, L-Met-L-Glu, L-Thr-L-Glu and L-Phe-L-Glu (in vitro). This chain is L-amino acid-D/L-Glu epimerase, found in Sulfurimonas denitrificans (strain ATCC 33889 / DSM 1251) (Thiomicrospira denitrificans (strain ATCC 33889 / DSM 1251)).